A 57-amino-acid chain; its full sequence is UPF0434 protein swp_2279 (57 aa).

The protein belongs to the UPF0434 family.

The protein is UPF0434 protein swp_2279 of Shewanella piezotolerans (strain WP3 / JCM 13877).